Consider the following 447-residue polypeptide: Cysteine--tRNA ligase (447 aa).

Cys28 serves as a coordination point for Zn(2+). A 'HIGH' region motif is present at residues 30–40 (PTVYNYIHIGN). Cys211, His236, and Glu240 together coordinate Zn(2+). A 'KMSKS' region motif is present at residues 268 to 272 (KMSKS). Lys271 is an ATP binding site.

It belongs to the class-I aminoacyl-tRNA synthetase family. In terms of assembly, monomer. Zn(2+) serves as cofactor.

Its subcellular location is the cytoplasm. It catalyses the reaction tRNA(Cys) + L-cysteine + ATP = L-cysteinyl-tRNA(Cys) + AMP + diphosphate. This Streptococcus thermophilus (strain CNRZ 1066) protein is Cysteine--tRNA ligase.